The following is a 154-amino-acid chain: Putative pre-16S rRNA nuclease (154 aa).

The protein belongs to the YqgF nuclease family.

It is found in the cytoplasm. Its function is as follows. Could be a nuclease involved in processing of the 5'-end of pre-16S rRNA. This is Putative pre-16S rRNA nuclease from Rickettsia peacockii (strain Rustic).